Reading from the N-terminus, the 427-residue chain is GTPase Obg (427 aa).

The Obg domain maps to 1 to 158 (MFVDIAKIYV…LWVILELKVL (158 aa)). The 172-residue stretch at 159 to 330 (ADVGLIGYPN…VLKRAYELLK (172 aa)) folds into the OBG-type G domain. Residues 165 to 172 (GYPNVGKS), 190 to 194 (FTTKY), 212 to 215 (DIPG), 282 to 285 (NKMD), and 311 to 313 (SAA) each bind GTP. Positions 172 and 192 each coordinate Mg(2+). Residues 347-427 (FVYYKKKDVK…ILDVEFEYYE (81 aa)) form the OCT domain.

The protein belongs to the TRAFAC class OBG-HflX-like GTPase superfamily. OBG GTPase family. In terms of assembly, monomer. It depends on Mg(2+) as a cofactor.

The protein resides in the cytoplasm. In terms of biological role, an essential GTPase which binds GTP, GDP and possibly (p)ppGpp with moderate affinity, with high nucleotide exchange rates and a fairly low GTP hydrolysis rate. Plays a role in control of the cell cycle, stress response, ribosome biogenesis and in those bacteria that undergo differentiation, in morphogenesis control. This chain is GTPase Obg, found in Caldicellulosiruptor saccharolyticus (strain ATCC 43494 / DSM 8903 / Tp8T 6331).